We begin with the raw amino-acid sequence, 95 residues long: Large ribosomal subunit protein bL27 (95 aa).

A propeptide spanning residues 1-10 is cleaved from the precursor; that stretch reads MLLTMNLQLF. The disordered stretch occupies residues 12–38; that stretch reads HKKGGGSTSNGRDSESKRLGAKSADGQ.

This sequence belongs to the bacterial ribosomal protein bL27 family. Post-translationally, the N-terminus is cleaved by ribosomal processing cysteine protease Prp.

The protein is Large ribosomal subunit protein bL27 of Enterococcus faecalis (strain ATCC 700802 / V583).